A 357-amino-acid polypeptide reads, in one-letter code: Protein-L-isoaspartate O-methyltransferase domain-containing protein 1 (357 aa).

The N-myristoyl glycine moiety is linked to residue Gly-2. Residue Ser-64 is part of the active site. AdoMet binding motif regions lie at residues 85–94 (LNLGSGTGYL), 160–164 (YDRIY), and 181–191 (LKVGGILVMPI). The interval 240 to 250 (VRNLQDLARIY) is BC-box. The tract at residues 299–331 (PLDSEEDEKMEEDSKEEEEKEHIEAMKREEPPQ) is disordered. The span at 301 to 317 (DSEEDEKMEEDSKEEEE) shows a compositional bias: acidic residues. Residues 318-331 (KEHIEAMKREEPPQ) are compositionally biased toward basic and acidic residues. A CUL-box region spans residues 341–344 (LPLP).

This sequence belongs to the methyltransferase superfamily. L-isoaspartyl/D-aspartyl protein methyltransferase family. Component of the probable ECS(PCMTD1) E3 ubiquitin-protein ligase complex, at least composed of CUL5, ELOB, ELOC, RBX2 and PCMTD1. Interacts (via the BC-box) with ELOB and ELOC; the interaction is direct and stabilizes PCMTD1.

Its subcellular location is the cytoplasm. The protein localises to the membrane. In terms of biological role, substrate recognition component of an ECS (Elongin BC-CUL5-SOCS-box protein) E3 ubiquitin ligase complex which mediates the ubiquitination and subsequent proteasomal degradation of target proteins. Specifically binds to the methyltransferase cofactor S-adenosylmethionine (AdoMet) via the N-terminal AdoMet binding motif, but does not display methyltransferase activity. May provide an alternate maintenance pathway for modified proteins by acting as a damage-specific E3 ubiquitin ligase adaptor protein. This chain is Protein-L-isoaspartate O-methyltransferase domain-containing protein 1 (Pcmtd1), found in Mus musculus (Mouse).